The sequence spans 496 residues: Aspartyl/glutamyl-tRNA(Asn/Gln) amidotransferase subunit B (496 aa).

The protein belongs to the GatB/GatE family. GatB subfamily. In terms of assembly, heterotrimer of A, B and C subunits.

The enzyme catalyses L-glutamyl-tRNA(Gln) + L-glutamine + ATP + H2O = L-glutaminyl-tRNA(Gln) + L-glutamate + ADP + phosphate + H(+). It carries out the reaction L-aspartyl-tRNA(Asn) + L-glutamine + ATP + H2O = L-asparaginyl-tRNA(Asn) + L-glutamate + ADP + phosphate + 2 H(+). In terms of biological role, allows the formation of correctly charged Asn-tRNA(Asn) or Gln-tRNA(Gln) through the transamidation of misacylated Asp-tRNA(Asn) or Glu-tRNA(Gln) in organisms which lack either or both of asparaginyl-tRNA or glutaminyl-tRNA synthetases. The reaction takes place in the presence of glutamine and ATP through an activated phospho-Asp-tRNA(Asn) or phospho-Glu-tRNA(Gln). The chain is Aspartyl/glutamyl-tRNA(Asn/Gln) amidotransferase subunit B from Natronomonas pharaonis (strain ATCC 35678 / DSM 2160 / CIP 103997 / JCM 8858 / NBRC 14720 / NCIMB 2260 / Gabara) (Halobacterium pharaonis).